The following is a 160-amino-acid chain: Ribosomal RNA large subunit methyltransferase H (160 aa).

Positions 76 and 108 each coordinate S-adenosyl-L-methionine.

The protein belongs to the RNA methyltransferase RlmH family. As to quaternary structure, homodimer.

The protein localises to the cytoplasm. The catalysed reaction is pseudouridine(1915) in 23S rRNA + S-adenosyl-L-methionine = N(3)-methylpseudouridine(1915) in 23S rRNA + S-adenosyl-L-homocysteine + H(+). Specifically methylates the pseudouridine at position 1915 (m3Psi1915) in 23S rRNA. The chain is Ribosomal RNA large subunit methyltransferase H from Rhodopseudomonas palustris (strain HaA2).